Consider the following 395-residue polypeptide: 1-deoxy-D-xylulose 5-phosphate reductoisomerase (395 aa).

NADPH contacts are provided by Thr13, Gly14, Ser15, Ile16, Lys40, and Asn127. Lys128 serves as a coordination point for 1-deoxy-D-xylulose 5-phosphate. Glu129 lines the NADPH pocket. Asp153 contacts Mn(2+). Residues Ser154, Glu155, Ser184, and His207 each contribute to the 1-deoxy-D-xylulose 5-phosphate site. Glu155 is a binding site for Mn(2+). Gly213 is an NADPH binding site. Residues Ser220, Asn225, Lys226, and Glu229 each contribute to the 1-deoxy-D-xylulose 5-phosphate site. Glu229 is a binding site for Mn(2+).

The protein belongs to the DXR family. It depends on Mg(2+) as a cofactor. Mn(2+) serves as cofactor.

The catalysed reaction is 2-C-methyl-D-erythritol 4-phosphate + NADP(+) = 1-deoxy-D-xylulose 5-phosphate + NADPH + H(+). Its pathway is isoprenoid biosynthesis; isopentenyl diphosphate biosynthesis via DXP pathway; isopentenyl diphosphate from 1-deoxy-D-xylulose 5-phosphate: step 1/6. Its function is as follows. Catalyzes the NADPH-dependent rearrangement and reduction of 1-deoxy-D-xylulose-5-phosphate (DXP) to 2-C-methyl-D-erythritol 4-phosphate (MEP). The protein is 1-deoxy-D-xylulose 5-phosphate reductoisomerase of Nitrosospira multiformis (strain ATCC 25196 / NCIMB 11849 / C 71).